Here is a 379-residue protein sequence, read N- to C-terminus: Glucose-1-phosphate adenylyltransferase (379 aa).

Alpha-D-glucose 1-phosphate contacts are provided by residues Tyr-99, Gly-164, 179-180, and Ser-190; that span reads EK.

The protein belongs to the bacterial/plant glucose-1-phosphate adenylyltransferase family. Homotetramer.

It catalyses the reaction alpha-D-glucose 1-phosphate + ATP + H(+) = ADP-alpha-D-glucose + diphosphate. It participates in glycan biosynthesis; glycogen biosynthesis. In terms of biological role, involved in the biosynthesis of ADP-glucose, a building block required for the elongation reactions to produce glycogen. Catalyzes the reaction between ATP and alpha-D-glucose 1-phosphate (G1P) to produce pyrophosphate and ADP-Glc. The protein is Glucose-1-phosphate adenylyltransferase of Bacillus licheniformis (strain ATCC 14580 / DSM 13 / JCM 2505 / CCUG 7422 / NBRC 12200 / NCIMB 9375 / NCTC 10341 / NRRL NRS-1264 / Gibson 46).